The following is a 182-amino-acid chain: tRNA-splicing endonuclease (182 aa).

Residues Tyr119, His127, and Lys158 contribute to the active site.

It belongs to the tRNA-intron endonuclease family. Archaeal short subfamily. Homotetramer; although the tetramer contains four active sites, only two participate in the cleavage. Therefore, it should be considered as a dimer of dimers.

It carries out the reaction pretRNA = a 3'-half-tRNA molecule with a 5'-OH end + a 5'-half-tRNA molecule with a 2',3'-cyclic phosphate end + an intron with a 2',3'-cyclic phosphate and a 5'-hydroxyl terminus.. Its function is as follows. Endonuclease that removes tRNA introns. Cleaves pre-tRNA at the 5'- and 3'-splice sites to release the intron. The products are an intron and two tRNA half-molecules bearing 2',3' cyclic phosphate and 5'-OH termini. Recognizes a pseudosymmetric substrate in which 2 bulged loops of 3 bases are separated by a stem of 4 bp. The polypeptide is tRNA-splicing endonuclease (Saccharolobus islandicus (strain M.14.25 / Kamchatka #1) (Sulfolobus islandicus)).